The following is a 229-amino-acid chain: Small ribosomal subunit protein uS3 (229 aa).

The 69-residue stretch at 17 to 85 (VKEWIKDEVR…NPQVSVDEVE (69 aa)) folds into the KH type-2 domain. The interval 202–229 (LRGESGEDEGDKGDEQGGEAQEAEGAGA) is disordered. A compositionally biased stretch (low complexity) spans 219-229 (GEAQEAEGAGA).

It belongs to the universal ribosomal protein uS3 family. Part of the 30S ribosomal subunit.

Functionally, binds the lower part of the 30S subunit head. In Archaeoglobus fulgidus (strain ATCC 49558 / DSM 4304 / JCM 9628 / NBRC 100126 / VC-16), this protein is Small ribosomal subunit protein uS3.